Consider the following 82-residue polypeptide: RNA-binding protein TTE2299 (82 aa).

This sequence belongs to the eukaryotic ribosomal protein eL8 family.

The protein is RNA-binding protein TTE2299 of Caldanaerobacter subterraneus subsp. tengcongensis (strain DSM 15242 / JCM 11007 / NBRC 100824 / MB4) (Thermoanaerobacter tengcongensis).